A 208-amino-acid chain; its full sequence is Large ribosomal subunit protein uL3 (208 aa).

The residue at position 149 (Gln149) is an N5-methylglutamine.

This sequence belongs to the universal ribosomal protein uL3 family. In terms of assembly, part of the 50S ribosomal subunit. Forms a cluster with proteins L14 and L19. Post-translationally, methylated by PrmB.

Functionally, one of the primary rRNA binding proteins, it binds directly near the 3'-end of the 23S rRNA, where it nucleates assembly of the 50S subunit. In Actinobacillus succinogenes (strain ATCC 55618 / DSM 22257 / CCUG 43843 / 130Z), this protein is Large ribosomal subunit protein uL3.